Here is a 175-residue protein sequence, read N- to C-terminus: NADH-ubiquinone oxidoreductase chain 6 (175 aa).

5 helical membrane-spanning segments follow: residues 1–21, 24–44, 46–66, 86–106, and 149–169; these read MMYTVFVMSVLFVVGFVGVSS, SPVYGGLGLVASGGVGCGIVV, FGGSFLGLMVFLVYLGGMMVV, IVVLGALVGGLLMEGAAVVYL, and YGCWFMVMSGWMLFISVFIVI.

It belongs to the complex I subunit 6 family. Core subunit of respiratory chain NADH dehydrogenase (Complex I) which is composed of 45 different subunits.

The protein resides in the mitochondrion inner membrane. It catalyses the reaction a ubiquinone + NADH + 5 H(+)(in) = a ubiquinol + NAD(+) + 4 H(+)(out). Its function is as follows. Core subunit of the mitochondrial membrane respiratory chain NADH dehydrogenase (Complex I) which catalyzes electron transfer from NADH through the respiratory chain, using ubiquinone as an electron acceptor. Essential for the catalytic activity and assembly of complex I. This Dugong dugon (Dugong) protein is NADH-ubiquinone oxidoreductase chain 6 (MT-ND6).